The primary structure comprises 253 residues: uncharacterized protein (253 aa).

A signal peptide spans 1–19; it reads MHYLKKVTIYISLLILVSG. C20 carries the N-palmitoyl cysteine lipid modification. C20 carries S-diacylglycerol cysteine lipidation.

It belongs to the staphylococcal tandem lipoprotein family.

The protein resides in the cell membrane. This is an uncharacterized protein from Staphylococcus epidermidis (strain ATCC 35984 / DSM 28319 / BCRC 17069 / CCUG 31568 / BM 3577 / RP62A).